The chain runs to 196 residues: Rho-related protein racA (196 aa).

Residues A13, G15, K16, T17, C18, Y32, T35, G60, K116, D118, and A159 each contribute to the GTP site. Position 17 (T17) interacts with Mg(2+). 2 consecutive short sequence motifs (switch) follow at residues 26–37 (NAFPNEYIPTVF) and 57–75 (DTAG…YPQT). Residue T35 participates in Mg(2+) binding. C193 bears the Cysteine methyl ester mark. C193 is lipidated: S-geranylgeranyl cysteine. Positions 194-196 (LLF) are cleaved as a propeptide — removed in mature form.

This sequence belongs to the small GTPase superfamily. Rho family. As to quaternary structure, interacts (GTP-bound form) with PAK2 (via CRIB domain). The cofactor is Mg(2+).

It localises to the cell membrane. The protein resides in the cytoplasm. It is found in the cytoskeleton. It catalyses the reaction GTP + H2O = GDP + phosphate + H(+). Its activity is regulated as follows. Regulated by guanine nucleotide exchange factors (GEFs) which promote the exchange of bound GDP for free GTP, GTPase activating proteins (GAPs) which increase the GTP hydrolysis activity, and GDP dissociation inhibitors which inhibit the dissociation of the nucleotide from the GTPase. In terms of biological role, small GTPase which cycles between active GTP-bound and inactive GDP-bound states. Involved in cytoskeleton remodeling. Plays a role in phagocytosis of bacteria and host erythrocytes. Involved in capping of surface receptors. May be involved in cytokinesis. The polypeptide is Rho-related protein racA (Entamoeba histolytica (strain ATCC 30459 / HM-1:IMSS / ABRM)).